The following is a 161-amino-acid chain: MPSFDVVCEANMIEVKNAIEQSNKEISTRFDFKGSDARVEHKENEITAYADDDFKLGQVKDVLLSKMAKRNVDVRFLDHGKIEKIGGDKVKQVIKIKKGVSGDLSKKIVRLVKDSKIKVQASIQGDAVRITGGKRDDLQSVIAMLRKDVTDTPLDFNNFRD.

This sequence belongs to the YajQ family.

Nucleotide-binding protein. This is Nucleotide-binding protein Bphyt_3208 from Paraburkholderia phytofirmans (strain DSM 17436 / LMG 22146 / PsJN) (Burkholderia phytofirmans).